The sequence spans 323 residues: MSSKPKSLEIIGAPFSKGQPRGGVEKGPAALRKAGLLEKLKETEYDVRDHGDLAFVDVPNDSSFQIVKNPRSVGKANEELAGVVAEVQKNGRVSVVLGGDHSLAVGSISGHARVHPDLCVIWVDAHTDINTPLTTSSGNLHGQPVSFLLKELKGKFPDVPGFSWVTPCISAKDIVYIGLRDVDPGEHYIIKTLGIKYFSMTEVDKLGIGKVMEETFSYLLGRKKRPIHLSFDVDGLDPAFTPATGTPVLGGLSYREGLYITEEIYKTGLLSGLDIMEVNPTLGKTAEEVKSTVNTAVALTLACFGTQREGNHKPGTDYLKPPK.

The disordered stretch occupies residues 1–27 (MSSKPKSLEIIGAPFSKGQPRGGVEKG). S7 carries the phosphoserine modification. K17 carries the N6-succinyllysine modification. Phosphoserine is present on residues S62 and S72. Residue K75 is modified to N6-succinyllysine. 4 residues coordinate Mn(2+): H101, D124, H126, and D128. Substrate contacts are provided by residues 126–130 (HTDIN) and 137–139 (SGN). S163 is subject to Phosphoserine. D183 contributes to the substrate binding site. At S217 the chain carries Phosphoserine. The Mn(2+) site is built by D232 and D234. Substrate contacts are provided by T246 and E277. T281 is modified (phosphothreonine).

The protein belongs to the arginase family. In terms of assembly, homotrimer. Interacts with CMTM6. Requires Mn(2+) as cofactor. As to expression, expressed in macrophages. Expressed in precursor and mature group 2 innate lymphoid cells (ILC2s). Expressed in lung tumor-associated myeloid cells. Expressed in lung tumor-infiltrating dendritic cells.

It is found in the cytoplasm. The protein localises to the cytoplasmic granule. It carries out the reaction L-arginine + H2O = urea + L-ornithine. Its pathway is nitrogen metabolism; urea cycle; L-ornithine and urea from L-arginine: step 1/1. Its function is as follows. Key element of the urea cycle converting L-arginine to urea and L-ornithine, which is further metabolized into metabolites proline and polyamides that drive collagen synthesis and bioenergetic pathways critical for cell proliferation, respectively; the urea cycle takes place primarily in the liver and, to a lesser extent, in the kidneys. In terms of biological role, functions in L-arginine homeostasis in nonhepatic tissues characterized by the competition between nitric oxide synthase (NOS) and arginase for the available intracellular substrate arginine. Arginine metabolism is a critical regulator of innate and adaptive immune responses. Involved in an antimicrobial effector pathway in polymorphonuclear granulocytes (PMN). Upon PMN cell death is liberated from the phagolysosome and depletes arginine in the microenvironment leading to suppressed T cell and natural killer (NK) cell proliferation and cytokine secretion. In group 2 innate lymphoid cells (ILC2s) promotes acute type 2 inflammation in the lung and is involved in optimal ILC2 proliferation but not survival. Plays a role in the immune response of alternatively activated or M2 macrophages in processes such as wound healing and tissue regeneration, immune defense against multicellular pathogens and parasites, and immune suppression and allergic inflammation; the regulatory outcome seems to be organ specific. In tumor-infiltrating dendritic cells (DCs) and myeloid-derived suppressor cells (MDSCs) plays a role in suppression of T cell-mediated antitumor immunity. In Mus musculus (Mouse), this protein is Arginase-1 (Arg1).